We begin with the raw amino-acid sequence, 148 residues long: Troponin C (148 aa).

4 consecutive EF-hand domains span residues 8–43 (KQFNDAHQAFKLHDKKDEGAVSNKELTNLFKSLALH), 44–79 (VSDDKLQQWVDEMDEDATGVIRWEKFKILFERKVQE), 81–116 (EDERELRSAFRVLDKNNQGVIDVEDLRWILKSLGDD), and 117–148 (LNDDEIQDMINETDTDGSGTVDYEEFSALMLG). Residues Asp130, Asp132, Ser134, Thr136, and Glu141 each contribute to the Ca(2+) site.

The protein belongs to the troponin C family.

In terms of biological role, troponin is the central regulatory protein of striated muscle contraction. Tn consists of three components: Tn-I which is the inhibitor of actomyosin ATPase, Tn-T which contains the binding site for tropomyosin and Tn-C. The binding of calcium to Tn-C abolishes the inhibitory action of Tn on actin filaments. In Todarodes pacificus (Japanese flying squid), this protein is Troponin C.